The primary structure comprises 415 residues: MGIKNLTKFIKEKCQEAYVTENINELSFKKIAIDTPMYMYKYKSMNAAKMVENNGIYYNPDGWLWSFIYFIYSLRKHDIHPIFILEGGYPEEKNKTRMARKKDREDVKKKTLSLEESISSYATSLRLRPEDIPQDLKEEWNKIAKKNNLPFEDFDFETVKDHVKQRHRYDIRITNRDYEKLKILLKIMNTPFIQAPMEAEAFCAYLYKKKIIHGIASNDSDILAYGCNLIVDFEFDVKIDEETKISKITYINYDYLLNKLDLQSSEFLDFCIMCGTDYNDNIYRIGAVKSYELIKVQKCIENVGKFLDPNNKKGTILILNHLRIRHIFNHYGMKNIDDVTNMQFLEKKASWSSVPNFYLLTMLTIKFNINIDLEWIRHGFEKCNIKWDCESEYEENVEKTNVEETNNEVDEFPIF.

The segment at 1 to 114 (MGIKNLTKFI…EDVKKKTLSL (114 aa)) is N-domain. Residues aspartate 34, glutamate 86, glutamate 198, glutamate 200, aspartate 219, aspartate 221, and aspartate 277 each contribute to the Mg(2+) site. The tract at residues 163–297 (VKQRHRYDIR…VKSYELIKVQ (135 aa)) is I-domain.

This sequence belongs to the XPG/RAD2 endonuclease family. It depends on Mg(2+) as a cofactor.

Its subcellular location is the host nucleus. Functionally, probable endonuclease. This is Probable RAD2-like endonuclease 369L from Acheta domesticus (House cricket).